The primary structure comprises 61 residues: UPF0370 protein SG1720 (61 aa).

The helical transmembrane segment at 3 to 23 (WLADYWWVVLLVLAGMLIGGV) threads the bilayer. Basic and acidic residues predominate over residues 37–47 (NRPELPPHRDN). The interval 37–61 (NRPELPPHRDNNAQWDEEDDWPKKP) is disordered. The segment covering 51–61 (WDEEDDWPKKP) has biased composition (acidic residues).

Belongs to the UPF0370 family.

The protein resides in the cell membrane. In Sodalis glossinidius (strain morsitans), this protein is UPF0370 protein SG1720.